Reading from the N-terminus, the 558-residue chain is Receptor-like kinase LIP2 (558 aa).

The segment at 1–45 (MHCFPCFSSPKNKKSSTTNETNDNNEPKPDDRRRAEETEEIEQSE) is disordered. Residues 15-24 (SSTTNETNDN) show a composition bias toward low complexity. A compositionally biased stretch (basic and acidic residues) spans 25–36 (NEPKPDDRRRAE). Threonine 53 carries the phosphothreonine modification. The Protein kinase domain occupies 64-343 (FRQECLLGEG…SDVMVALSFL (280 aa)). ATP contacts are provided by residues 70–78 (LGEGGFGRV) and lysine 93. At tyrosine 138 the chain carries Phosphotyrosine. The active-site Proton acceptor is the aspartate 191. Serine 195 and serine 227 each carry phosphoserine. Position 233 is a phosphothreonine (threonine 233). Tyrosine 241 is modified (phosphotyrosine). The disordered stretch occupies residues 372–558 (HDSNLVSPPP…SDVAIDSIKE (187 aa)). Over residues 401-418 (ESEKESVSKNEYKKKHEE) the composition is skewed to basic and acidic residues. Over residues 419–431 (EDSSMESDDESDS) the composition is skewed to acidic residues. A compositionally biased stretch (basic and acidic residues) spans 432–448 (NSEHEKDQPPKPIDEKN). Positions 473–486 (SKSSQKSNDESTSS) are enriched in low complexity. Composition is skewed to basic and acidic residues over residues 488–500 (YDSD…KGKE), 508–524 (EEKH…KTDD), and 547–558 (IKSDVAIDSIKE).

The protein belongs to the protein kinase superfamily. Ser/Thr protein kinase family. Interacts with PRK6. In terms of processing, palmitoylated. As to expression, expressed in mature pollen and in germinating pollen tubes.

It is found in the cell membrane. In terms of biological role, involved in pollen tube guidance into micropyle. Participates in perception of the ovule-secreted peptide signal LURE1. This Arabidopsis thaliana (Mouse-ear cress) protein is Receptor-like kinase LIP2.